A 92-amino-acid polypeptide reads, in one-letter code: Small ribosomal subunit protein uS19c (92 aa).

This sequence belongs to the universal ribosomal protein uS19 family.

The protein localises to the plastid. It localises to the cyanelle. Its function is as follows. Protein S19 forms a complex with S13 that binds strongly to the 16S ribosomal RNA. This chain is Small ribosomal subunit protein uS19c (rps19), found in Cyanophora paradoxa.